The following is a 755-amino-acid chain: Dynamin-1-like protein (755 aa).

The residue at position 1 (M1) is an N-acetylmethionine. The Dynamin-type G domain occupies 22–315; sequence IIQLPQIVVV…LMHHIRDCLP (294 aa). The interval 32-39 is G1 motif; it reads GTQSSGKS. 32–40 provides a ligand contact to GTP; the sequence is GTQSSGKSS. The G2 motif stretch occupies residues 58 to 60; that stretch reads VTR. The tract at residues 159–162 is G3 motif; it reads DLPG. Residues 228-231 form a G4 motif region; that stretch reads TKLD. Residues 228–234 and 259–262 contribute to the GTP site; these read TKLDLMD and NRSQ. The segment at 258–261 is G5 motif; it reads VNRS. Residues 357–502 form a middle domain region; sequence YCNTIEGTAK…NEMVHNLVAI (146 aa). An interaction with GSK3B region spans residues 461-704; that stretch reads NYSTQELLRF…NHVKDTLQSE (244 aa). Residues 515-582 are b domain; sequence ADACGLMNNN…IQDNRRETKN (68 aa). Residues 536 to 610 form a disordered region; the sequence is ELPSAVSRDK…QEPTTGNWRG (75 aa). A Phosphoserine modification is found at S542. Glycyl lysine isopeptide (Lys-Gly) (interchain with G-Cter in SUMO) cross-links involve residues K545 and K548. Low complexity predominate over residues 550 to 567; that stretch reads PSALAPASQEPSPAASAE. At S561 the chain carries Phosphoserine. The segment covering 568 to 581 has biased composition (basic and acidic residues); that stretch reads ADGKLIQDNRRETK. Residues K571 and K581 each participate in a glycyl lysine isopeptide (Lys-Gly) (interchain with G-Cter in SUMO) cross-link. The span at 586–600 shows a compositional bias: gly residues; it reads AGGGIGDGGRIGDGG. O-linked (GlcNAc) threonine glycans are attached at residues T604 and T605. K613 participates in a covalent cross-link: Glycyl lysine isopeptide (Lys-Gly) (interchain with G-Cter in SUMO). An N6-acetyllysine; alternate modification is found at K616. Residue K616 forms a Glycyl lysine isopeptide (Lys-Gly) (interchain with G-Cter in SUMO); alternate linkage. K625 is covalently cross-linked (Glycyl lysine isopeptide (Lys-Gly) (interchain with G-Cter in SUMO)). S626 is subject to Phosphoserine. Residue K627 forms a Glycyl lysine isopeptide (Lys-Gly) (interchain with G-Cter in SUMO) linkage. At S635 the chain carries Phosphoserine; by CDK1. S656 carries the post-translational modification Phosphoserine; by CAMK1 and PKA. C663 carries the post-translational modification S-nitrosocysteine. One can recognise a GED domain in the interval 663 to 754; the sequence is CEVIERLIKS…IIAEIRETHL (92 aa). The interval 673–687 is important for homodimerization; the sequence is YFLIVRKNIQDSVPK.

Belongs to the TRAFAC class dynamin-like GTPase superfamily. Dynamin/Fzo/YdjA family. Homotetramer; dimerizes through the N-terminal GTP-middle region of one molecule binding to the GED domain of another DNM1L molecule. Oligomerizes in a GTP-dependent manner to form membrane-associated tubules with a spiral pattern. Interacts with GSK3B and MARCHF5. Interacts (via the GTPase and B domains) with UBE2I; the interaction promotes sumoylation of DNM1L, mainly in its B domain. Interacts with PPP3CA; the interaction dephosphorylates DNM1L and regulates its transition to mitochondria. Interacts with BCL2L1 isoform BCL-X(L) and CLTA; DNM1L and BCL2L1 isoform BCL-X(L) may form a complex in synaptic vesicles that also contains clathrin and MFF. Interacts with MFF; the interaction is inhinited by C11orf65/MFI. Interacts with FIS1. Interacts with MIEF2 and MIEF1; GTP-dependent this regulates GTP hydrolysis and DNM1L oligomerization. Interacts with PGAM5; this interaction leads to dephosphorylation at Ser-656 and activation of GTPase activity and eventually to mitochondria fragmentation. Interacts with RALBP1; during mitosis, recruits DNM1L to the mitochondrion and mediates its activation by the mitotic kinase cyclin B-CDK1. Interacts with FUNDC1; this interaction recruits DNM1L/DRP1 at ER-mitochondria contact sites. Post-translationally, phosphorylation/dephosphorylation events on two sites near the GED domain regulate mitochondrial fission. Phosphorylation on Ser-656 by CAMK1 and PKA inhibits the GTPase activity, leading to a defect in mitochondrial fission promoting mitochondrial elongation. Dephosphorylated on this site by PPP3CA which promotes mitochondrial fission. Phosphorylation on Ser-635 by PINK1 activates the GTPase activity and promotes mitochondrial fission. Phosphorylation on Ser-635 by CDK1 also promotes mitochondrial fission. Phosphorylated in a circadian manner at Ser-656. Dephosphorylated by PGAM5. In terms of processing, sumoylated on various lysine residues within the B domain, probably by MUL1. Sumoylation positively regulates mitochondrial fission. Desumoylated by SENP5 during G2/M transition of mitosis. Appears to be linked to its catalytic activity. S-nitrosylation increases DNM1L dimerization, mitochondrial fission and causes neuronal damage. Post-translationally, O-GlcNAcylation augments the level of the GTP-bound active form of DNM1L and induces translocation from the cytoplasm to mitochondria in cardiomyocytes. It also decreases phosphorylation at Ser-656. In terms of processing, ubiquitination by MARCHF5 affects mitochondrial morphology. As to expression, expressed in all tissues tested (at protein level). Longer isoforms are preferentially expressed in brain.

The protein localises to the cytoplasm. It is found in the cytosol. The protein resides in the golgi apparatus. Its subcellular location is the endomembrane system. It localises to the mitochondrion outer membrane. The protein localises to the peroxisome. It is found in the membrane. The protein resides in the clathrin-coated pit. Its subcellular location is the cytoplasmic vesicle. It localises to the secretory vesicle. The protein localises to the synaptic vesicle membrane. The catalysed reaction is GTP + H2O = GDP + phosphate + H(+). Functions in mitochondrial and peroxisomal division. Mediates membrane fission through oligomerization into membrane-associated tubular structures that wrap around the scission site to constrict and sever the mitochondrial membrane through a GTP hydrolysis-dependent mechanism. The specific recruitment at scission sites is mediated by membrane receptors like MFF, MIEF1 and MIEF2 for mitochondrial membranes. While the recruitment by the membrane receptors is GTP-dependent, the following hydrolysis of GTP induces the dissociation from the receptors and allows DNM1L filaments to curl into closed rings that are probably sufficient to sever a double membrane. Acts downstream of PINK1 to promote mitochondrial fission in a PRKN-dependent manner. Plays an important role in mitochondrial fission during mitosis. Through its function in mitochondrial division, ensures the survival of at least some types of postmitotic neurons, including Purkinje cells, by suppressing oxidative damage. Required for normal brain development, including that of cerebellum. Facilitates developmentally regulated apoptosis during neural tube formation. Required for a normal rate of cytochrome c release and caspase activation during apoptosis; this requirement may depend upon the cell type and the physiological apoptotic cues. Required for formation of endocytic vesicles. Proposed to regulate synaptic vesicle membrane dynamics through association with BCL2L1 isoform Bcl-X(L) which stimulates its GTPase activity in synaptic vesicles; the function may require its recruitment by MFF to clathrin-containing vesicles. Required for programmed necrosis execution. Rhythmic control of its activity following phosphorylation at Ser-656 is essential for the circadian control of mitochondrial ATP production. In Rattus norvegicus (Rat), this protein is Dynamin-1-like protein.